The sequence spans 681 residues: NAD(P)H-quinone oxidoreductase chain 5 (681 aa).

Helical transmembrane passes span 7–27, 39–59, 89–109, 120–140, 144–164, 188–208, 219–239, 258–278, 289–309, 327–347, 352–372, 395–415, 420–440, 509–529, 558–578, and 660–680; these read LAWL…IGLI, INAV…GALL, IDHL…LVMI, GYVR…GLVI, LVQV…LIGF, GLLL…FGTI, GVLS…GPVA, TPIS…FLVA, VVMN…ATIA, LGYM…FHLM, FKAM…GVVG, ATCF…AGFW, ILGL…ATAG, LTMT…GLLG, FYVM…VASL, and AQFY…VFSL.

It belongs to the complex I subunit 5 family.

It localises to the cell membrane. The enzyme catalyses a plastoquinone + NADH + (n+1) H(+)(in) = a plastoquinol + NAD(+) + n H(+)(out). It catalyses the reaction a plastoquinone + NADPH + (n+1) H(+)(in) = a plastoquinol + NADP(+) + n H(+)(out). NDH-1 shuttles electrons from NAD(P)H, via FMN and iron-sulfur (Fe-S) centers, to quinones in the respiratory chain. The immediate electron acceptor for the enzyme in this species is believed to be plastoquinone. Couples the redox reaction to proton translocation (for every two electrons transferred, four hydrogen ions are translocated across the cytoplasmic membrane), and thus conserves the redox energy in a proton gradient. In Synechocystis sp. (strain ATCC 27184 / PCC 6803 / Kazusa), this protein is NAD(P)H-quinone oxidoreductase chain 5 (ndhF).